A 74-amino-acid polypeptide reads, in one-letter code: Sec-independent protein translocase protein TatA (74 aa).

A helical transmembrane segment spans residues 1–21 (MGGISIWQLLIIVAIIVLLFG). Residues 51–74 (ANFDKVEAKESTSTTEKTKEKEQA) are disordered.

This sequence belongs to the TatA/E family. As to quaternary structure, the Tat system comprises two distinct complexes: a TatABC complex, containing multiple copies of TatA, TatB and TatC subunits, and a separate TatA complex, containing only TatA subunits. Substrates initially bind to the TatABC complex, which probably triggers association of the separate TatA complex to form the active translocon.

Its subcellular location is the cell inner membrane. Part of the twin-arginine translocation (Tat) system that transports large folded proteins containing a characteristic twin-arginine motif in their signal peptide across membranes. TatA could form the protein-conducting channel of the Tat system. The sequence is that of Sec-independent protein translocase protein TatA from Haemophilus ducreyi (strain 35000HP / ATCC 700724).